The primary structure comprises 219 residues: Thiamine-phosphate synthase (219 aa).

4-amino-2-methyl-5-(diphosphooxymethyl)pyrimidine contacts are provided by residues 48-52 (QFRQK) and Asn-84. Mg(2+) is bound by residues Asp-85 and Asp-104. Residue Ser-123 coordinates 4-amino-2-methyl-5-(diphosphooxymethyl)pyrimidine. Residue 150–152 (TPS) participates in 2-[(2R,5Z)-2-carboxy-4-methylthiazol-5(2H)-ylidene]ethyl phosphate binding. Position 153 (Lys-153) interacts with 4-amino-2-methyl-5-(diphosphooxymethyl)pyrimidine. Residues Gly-181 and 199 to 200 (IS) contribute to the 2-[(2R,5Z)-2-carboxy-4-methylthiazol-5(2H)-ylidene]ethyl phosphate site.

It belongs to the thiamine-phosphate synthase family. Requires Mg(2+) as cofactor.

It catalyses the reaction 2-[(2R,5Z)-2-carboxy-4-methylthiazol-5(2H)-ylidene]ethyl phosphate + 4-amino-2-methyl-5-(diphosphooxymethyl)pyrimidine + 2 H(+) = thiamine phosphate + CO2 + diphosphate. It carries out the reaction 2-(2-carboxy-4-methylthiazol-5-yl)ethyl phosphate + 4-amino-2-methyl-5-(diphosphooxymethyl)pyrimidine + 2 H(+) = thiamine phosphate + CO2 + diphosphate. The catalysed reaction is 4-methyl-5-(2-phosphooxyethyl)-thiazole + 4-amino-2-methyl-5-(diphosphooxymethyl)pyrimidine + H(+) = thiamine phosphate + diphosphate. The protein operates within cofactor biosynthesis; thiamine diphosphate biosynthesis; thiamine phosphate from 4-amino-2-methyl-5-diphosphomethylpyrimidine and 4-methyl-5-(2-phosphoethyl)-thiazole: step 1/1. Functionally, condenses 4-methyl-5-(beta-hydroxyethyl)thiazole monophosphate (THZ-P) and 2-methyl-4-amino-5-hydroxymethyl pyrimidine pyrophosphate (HMP-PP) to form thiamine monophosphate (TMP). In Helicobacter pylori (strain ATCC 700392 / 26695) (Campylobacter pylori), this protein is Thiamine-phosphate synthase.